The sequence spans 468 residues: MTSQLHKKGEAWSARFSEPMSELVKRYTSSVFFDKRLALVDIEGSLAHASMLAAQKIIAADDLTAIQRGMAQIKGEIERGEFEWQLDLEDVHLNIEARLTALIGDAGKRLHTGRSRNDQVATDIRLWLRGEIDRIGGLLTELRTALLDMAEKNAATIMPGFTHLQVAQPVTFGHHLLAYVEMFSRDAERMIDCRKRVNRLPLGAAALAGTSYPIDRYAVAKTLGFDGICANSLDAVSDRDFAIEFTAASALVMTHISRFSEELVLWMSPRVGFIDLADRFCTGSSIMPQKKNPDVPELARGKTGRVNGHLIALLTLMKGQPLAYNKDNQEDKEPLFDTVDTVADTLRIFAEMVAGISVKPQAMRDAALQGFSTATDLADYLVKRGLPFRDAHEAVALAVRVCADRGCDLADLTLEEMRKELSNVAHLIGEDVFSYLTLEGSVASRNHPGGTAPEQVLAAVKAAREALK.

The protein belongs to the lyase 1 family. Argininosuccinate lyase subfamily.

It localises to the cytoplasm. It catalyses the reaction 2-(N(omega)-L-arginino)succinate = fumarate + L-arginine. It participates in amino-acid biosynthesis; L-arginine biosynthesis; L-arginine from L-ornithine and carbamoyl phosphate: step 3/3. The polypeptide is Argininosuccinate lyase (Paraburkholderia xenovorans (strain LB400)).